The primary structure comprises 195 residues: Orotate phosphoribosyltransferase (195 aa).

5-phospho-alpha-D-ribose 1-diphosphate contacts are provided by residues arginine 87, lysine 91, and 112–120; that span reads DDVATTGGS. Positions 116 and 144 each coordinate orotate.

Belongs to the purine/pyrimidine phosphoribosyltransferase family. PyrE subfamily. In terms of assembly, homodimer. Mg(2+) is required as a cofactor.

It catalyses the reaction orotidine 5'-phosphate + diphosphate = orotate + 5-phospho-alpha-D-ribose 1-diphosphate. It participates in pyrimidine metabolism; UMP biosynthesis via de novo pathway; UMP from orotate: step 1/2. Catalyzes the transfer of a ribosyl phosphate group from 5-phosphoribose 1-diphosphate to orotate, leading to the formation of orotidine monophosphate (OMP). The chain is Orotate phosphoribosyltransferase from Sulfurisphaera tokodaii (strain DSM 16993 / JCM 10545 / NBRC 100140 / 7) (Sulfolobus tokodaii).